The sequence spans 495 residues: UDP-N-acetylmuramoyl-L-alanyl-D-glutamate--2,6-diaminopimelate ligase (495 aa).

Residues Leu27, Ser29, and 44-46 contribute to the UDP-N-acetyl-alpha-D-muramoyl-L-alanyl-D-glutamate site; that span reads HQA. 116–122 contacts ATP; it reads GTNGKTT. UDP-N-acetyl-alpha-D-muramoyl-L-alanyl-D-glutamate-binding positions include Asn157, 158-159, Ser185, Gln191, and Arg193; that span reads TT. Lys225 is modified (N6-carboxylysine). Meso-2,6-diaminopimelate-binding positions include Arg390, 414-417, Gly465, and Glu469; that span reads DNPR. The Meso-diaminopimelate recognition motif signature appears at 414–417; it reads DNPR.

This sequence belongs to the MurCDEF family. MurE subfamily. Mg(2+) is required as a cofactor. Post-translationally, carboxylation is probably crucial for Mg(2+) binding and, consequently, for the gamma-phosphate positioning of ATP.

The protein resides in the cytoplasm. It carries out the reaction UDP-N-acetyl-alpha-D-muramoyl-L-alanyl-D-glutamate + meso-2,6-diaminopimelate + ATP = UDP-N-acetyl-alpha-D-muramoyl-L-alanyl-gamma-D-glutamyl-meso-2,6-diaminopimelate + ADP + phosphate + H(+). It functions in the pathway cell wall biogenesis; peptidoglycan biosynthesis. Catalyzes the addition of meso-diaminopimelic acid to the nucleotide precursor UDP-N-acetylmuramoyl-L-alanyl-D-glutamate (UMAG) in the biosynthesis of bacterial cell-wall peptidoglycan. The sequence is that of UDP-N-acetylmuramoyl-L-alanyl-D-glutamate--2,6-diaminopimelate ligase from Enterobacter sp. (strain 638).